Reading from the N-terminus, the 465-residue chain is Probable inactive receptor-like kinase BSK12 (465 aa).

Residues methionine 1 to aspartate 12 are compositionally biased toward polar residues. The interval methionine 1–proline 34 is disordered. Glycine 2 carries the N-myristoyl glycine lipid modification. 2 S-palmitoyl cysteine lipidation sites follow: cysteine 3 and cysteine 4. The region spanning phenylalanine 50–leucine 291 is the Protein kinase domain. ATP-binding positions include valine 56 to valine 64 and lysine 78.

It belongs to the protein kinase superfamily. Ser/Thr protein kinase family. As to quaternary structure, interacts with YDA. Post-translationally, diacylation-mediated membrane association is essential for BSK12 function. In terms of tissue distribution, expressed at the mRNA level in the sperm cells in mature pollen, but the protein is only detectable in the zygote and the micropylar endosperm upon fertilization.

It localises to the cell membrane. Its function is as follows. Probable inactive protein kinase that activates the YODA MAP kinase cascade, which regulates the asymmetric first division and embryo polarity, by promoting the elongation of the zygote and the development of its basal daughter cell into the extra-embryonic suspensor. Acts as an adapter at the plasma membrane, possibly by recruiting and binding an activator. The polypeptide is Probable inactive receptor-like kinase BSK12 (Arabidopsis thaliana (Mouse-ear cress)).